Here is a 201-residue protein sequence, read N- to C-terminus: Homeobox protein ceh-28 (201 aa).

Positions 72–84 (SYYSSPSQNQRSY) are enriched in polar residues. Residues 72–94 (SYYSSPSQNQRSYQNHRQHSNPD) form a disordered region. Positions 104–163 (KRKPRVLFTQHQVNELEERFKKQRYVTATEREELAQCLGLTATQVKIWFQNRRYKCKRLA) form a DNA-binding region, homeobox.

The protein belongs to the NK-2 homeobox family.

Its subcellular location is the nucleus. Its function is as follows. Probable transcription factor that regulates neuronal differention, including synapse assembly of the cholinergic motor neuron M4. Activates expression of growth factor, neuropeptide and transcription factor genes, such as TGF-beta dbl-1, FMRFamide-like flp-5 and transcription repressor zag-1, in the M4 neuron. Required for pharynx peristalsis. The polypeptide is Homeobox protein ceh-28 (Caenorhabditis elegans).